The sequence spans 445 residues: Putative diacyglycerol O-acyltransferase Rv2285 (445 aa).

Histidine 135 functions as the Proton acceptor in the catalytic mechanism.

The protein belongs to the long-chain O-acyltransferase family.

The enzyme catalyses an acyl-CoA + a 1,2-diacyl-sn-glycerol = a triacyl-sn-glycerol + CoA. The catalysed reaction is di-(9Z)-octadecenoylglycerol + (9Z)-octadecenoyl-CoA = 1,2,3-tri-(9Z-octadecenoyl)-glycerol + CoA. The protein operates within glycerolipid metabolism; triacylglycerol biosynthesis. Catalyzes the terminal and only committed step in triacylglycerol synthesis by using diacylglycerol and fatty acyl CoA as substrates. Required for storage lipid synthesis. Functionally, upon expression in E.coli functions weakly as a triacylglycerol synthase, making triacylglycerol (TG) from diolein and long-chain fatty acyl-CoA. Has very weak wax synthase activity, incorporating palmityl alcohol into wax esters in the presence of palmitoyl-CoA. The chain is Putative diacyglycerol O-acyltransferase Rv2285 from Mycobacterium tuberculosis (strain ATCC 25618 / H37Rv).